The primary structure comprises 591 residues: MKKISLPKIGIRPVIDGRRMGVRESLEEQTMNMAKATAALITEKIRHACGAQVECVIADTCIAGMAESAACEEKFSSQNVGVTITVTPCWCYGSETIDMDPMRPKAIWGFNGTERPGAVYLAAALAAHSQKGIPAFSIYGHDVQDADDTSIPADVEEKLLRFARAGLAVASMKGKSYLSVGGVSMGIAGSIVDHNFFESWLGMKVQAVDMTELRRRIDQKIYDEAELEMALAWADKNFRYGEDQNASQYKRNEAQNRAVLKESLLMAMCIRDMMQGNKTLADKGLVEESLGYNAIAAGFQGQRHWTDQYPNGDTAEALLNSSFDWNGIREPFVVATENDSLNGVAMLFGHQLTGTAQIFADVRTYWSPEAVERVTGQALSGLAEHGIIHLINSGSAALDGACKQRDSEGKPTMKPHWEISQQEADACLAATEWCPAIHEYFRGGGYSSRFLTEGGVPFTMTRVNIIKGLGPVLQIAEGWSVELPKAMHDQLDARTNSTWPTTWFAPRLTGKGPFTDVYSVMANWGANHGVLTIGHVGADFITLAAMLRIPVCMHNVEEAKIYRPSAWAAHGMDIEGQDYRACQNYGPLYKR.

Residues Glu-337 and Asp-361 each act as proton acceptor in the active site. Residues Glu-337, Asp-361, and His-528 each coordinate Mn(2+).

This sequence belongs to the L-fucose isomerase family. As to quaternary structure, homohexamer. Requires Mn(2+) as cofactor.

The protein resides in the cytoplasm. It catalyses the reaction L-fucose = L-fuculose. It participates in carbohydrate degradation; L-fucose degradation; L-lactaldehyde and glycerone phosphate from L-fucose: step 1/3. Functionally, converts the aldose L-fucose into the corresponding ketose L-fuculose. This is L-fucose isomerase from Salmonella schwarzengrund (strain CVM19633).